Here is a 146-residue protein sequence, read N- to C-terminus: Large ribosomal subunit protein uL15 (146 aa).

The segment covering 1-13 (MKLHELKAAEGSR) has biased composition (basic and acidic residues). Residues 1-56 (MKLHELKAAEGSRRVRNRVGRGAGSGNGKTSGRGQKGQKARSGGGVRPGFEGGQLP) are disordered. Composition is skewed to gly residues over residues 21–35 (RGAGSGNGKTSGRGQ) and 42–52 (SGGGVRPGFEG).

The protein belongs to the universal ribosomal protein uL15 family. Part of the 50S ribosomal subunit.

Its function is as follows. Binds to the 23S rRNA. This Staphylococcus haemolyticus (strain JCSC1435) protein is Large ribosomal subunit protein uL15.